Reading from the N-terminus, the 361-residue chain is Biotin synthase (361 aa).

One can recognise a Radical SAM core domain in the interval 47-278; that stretch reads VHGDEVALCG…AAHIFVMGGR (232 aa). Residues Cys65, Cys69, and Cys72 each contribute to the [4Fe-4S] cluster site. The [2Fe-2S] cluster site is built by Ser110, Cys143, and Cys203. Residues 323–361 form a disordered region; the sequence is TLRPPDTGKPWAFDGHAPSDADWNRKAAEPRPRPLPVVR. The span at 339–354 shows a compositional bias: basic and acidic residues; it reads APSDADWNRKAAEPRP.

The protein belongs to the radical SAM superfamily. Biotin synthase family. In terms of assembly, homodimer. It depends on [4Fe-4S] cluster as a cofactor. Requires [2Fe-2S] cluster as cofactor.

The enzyme catalyses (4R,5S)-dethiobiotin + (sulfur carrier)-SH + 2 reduced [2Fe-2S]-[ferredoxin] + 2 S-adenosyl-L-methionine = (sulfur carrier)-H + biotin + 2 5'-deoxyadenosine + 2 L-methionine + 2 oxidized [2Fe-2S]-[ferredoxin]. The protein operates within cofactor biosynthesis; biotin biosynthesis; biotin from 7,8-diaminononanoate: step 2/2. In terms of biological role, catalyzes the conversion of dethiobiotin (DTB) to biotin by the insertion of a sulfur atom into dethiobiotin via a radical-based mechanism. The polypeptide is Biotin synthase (Anaeromyxobacter sp. (strain K)).